A 124-amino-acid polypeptide reads, in one-letter code: Small ribosomal subunit protein uS13 (124 aa).

The interval 91-124 is disordered; the sequence is HRKGLPVNGQNTRNNARTRKGKPKAVTGKKQAGK.

This sequence belongs to the universal ribosomal protein uS13 family. In terms of assembly, part of the 30S ribosomal subunit. Forms a loose heterodimer with protein S19. Forms two bridges to the 50S subunit in the 70S ribosome.

Functionally, located at the top of the head of the 30S subunit, it contacts several helices of the 16S rRNA. In the 70S ribosome it contacts the 23S rRNA (bridge B1a) and protein L5 of the 50S subunit (bridge B1b), connecting the 2 subunits; these bridges are implicated in subunit movement. Contacts the tRNAs in the A and P-sites. The chain is Small ribosomal subunit protein uS13 from Acholeplasma laidlawii (strain PG-8A).